Here is a 262-residue protein sequence, read N- to C-terminus: Thiazole synthase (262 aa).

Lys-98 functions as the Schiff-base intermediate with DXP in the catalytic mechanism. 1-deoxy-D-xylulose 5-phosphate-binding positions include Gly-159, 186–187 (AG), and 208–209 (NT).

This sequence belongs to the ThiG family. In terms of assembly, homotetramer. Forms heterodimers with either ThiH or ThiS.

It localises to the cytoplasm. The catalysed reaction is [ThiS sulfur-carrier protein]-C-terminal-Gly-aminoethanethioate + 2-iminoacetate + 1-deoxy-D-xylulose 5-phosphate = [ThiS sulfur-carrier protein]-C-terminal Gly-Gly + 2-[(2R,5Z)-2-carboxy-4-methylthiazol-5(2H)-ylidene]ethyl phosphate + 2 H2O + H(+). It participates in cofactor biosynthesis; thiamine diphosphate biosynthesis. Catalyzes the rearrangement of 1-deoxy-D-xylulose 5-phosphate (DXP) to produce the thiazole phosphate moiety of thiamine. Sulfur is provided by the thiocarboxylate moiety of the carrier protein ThiS. In vitro, sulfur can be provided by H(2)S. In Hahella chejuensis (strain KCTC 2396), this protein is Thiazole synthase.